The primary structure comprises 191 residues: Potassium-transporting ATPase KdpC subunit (191 aa).

The chain crosses the membrane as a helical span at residues 13–35 (VLFTGLCGLAYPLAITGVAQAVL). The segment at 112-132 (SGPVPADAVTSSASGLDPDIS) is disordered.

This sequence belongs to the KdpC family. As to quaternary structure, the system is composed of three essential subunits: KdpA, KdpB and KdpC.

The protein localises to the cell inner membrane. In terms of biological role, part of the high-affinity ATP-driven potassium transport (or Kdp) system, which catalyzes the hydrolysis of ATP coupled with the electrogenic transport of potassium into the cytoplasm. This subunit acts as a catalytic chaperone that increases the ATP-binding affinity of the ATP-hydrolyzing subunit KdpB by the formation of a transient KdpB/KdpC/ATP ternary complex. This is Potassium-transporting ATPase KdpC subunit from Allorhizobium ampelinum (strain ATCC BAA-846 / DSM 112012 / S4) (Agrobacterium vitis (strain S4)).